The primary structure comprises 309 residues: Olfactory receptor 1A2 (309 aa).

Residues 1–25 (MKKENQSFNLDFILLGVTSQQEQNN) lie on the Extracellular side of the membrane. N5 carries an N-linked (GlcNAc...) asparagine glycan. The helical transmembrane segment at 26-49 (VFFVIFLCIYPITLTGNLLIILAI) threads the bilayer. Residues 50-57 (CADIRLHN) are Cytoplasmic-facing. A helical transmembrane segment spans residues 58 to 79 (PMYFLLANLSLVDIIFSSVTIP). The Extracellular portion of the chain corresponds to 80–100 (KVLANHLLGSKFISFGGCLMQ). C97 and C189 are disulfide-bonded. Residues 101 to 120 (MYFMIALAKADSYTLAAMAY) form a helical membrane-spanning segment. Residues 121–139 (DRAVAISCPLHYTTIMSPR) are Cytoplasmic-facing. Residues 140–158 (SCILLIAGSWVIGNTSALP) traverse the membrane as a helical segment. Over 159 to 195 (HTLLTASLSFCGNQEVANFYCDIMPLLKLSCSDVHFN) the chain is Extracellular. The chain crosses the membrane as a helical span at residues 196–218 (VKMMYLGVGVFSLPLLCIIVSYV). Topologically, residues 219 to 235 (QVFSTVFQVPSTKSLFK) are cytoplasmic. A helical membrane pass occupies residues 236–258 (AFCTCGSHLTVVFLYYGTTMGMY). Residues 259–270 (FRPLTSYSPKDA) lie on the Extracellular side of the membrane. Residues 271–290 (VITVMYVAVTPALNPFIYSL) traverse the membrane as a helical segment. The Cytoplasmic segment spans residues 291–309 (RNWDMKAALQKLFSKRISS).

This sequence belongs to the G-protein coupled receptor 1 family.

Its subcellular location is the cell membrane. Its function is as follows. Odorant receptor. In Homo sapiens (Human), this protein is Olfactory receptor 1A2 (OR1A2).